A 69-amino-acid polypeptide reads, in one-letter code: Cytochrome b-c1 complex subunit 6-1, mitochondrial (69 aa).

2 disulfides stabilise this stretch: C17-C59 and C31-C45.

It belongs to the UQCRH/QCR6 family. As to quaternary structure, component of the ubiquinol-cytochrome c oxidoreductase (cytochrome b-c1 complex, complex III, CIII), a multisubunit enzyme composed of 10 subunits. The complex is composed of 3 respiratory subunits cytochrome b (MT-CYB), cytochrome c1 (CYC1-1 or CYC1-2) and Rieske protein (UCR1-1 or UCR1-2), 2 core protein subunits MPPalpha1 (or MPPalpha2) and MPPB, and 5 low-molecular weight protein subunits QCR7-1 (or QCR7-2), UCRQ-1 (or UCRQ-2), QCR9, UCRY and probably QCR6-1 (or QCR6-2). The complex exists as an obligatory dimer and forms supercomplexes (SCs) in the inner mitochondrial membrane with NADH-ubiquinone oxidoreductase (complex I, CI), resulting in different assemblies (supercomplexes SCI(1)III(2) and SCI(2)III(4)).

It localises to the mitochondrion inner membrane. Functionally, component of the ubiquinol-cytochrome c oxidoreductase, a multisubunit transmembrane complex that is part of the mitochondrial electron transport chain which drives oxidative phosphorylation. The respiratory chain contains 3 multisubunit complexes succinate dehydrogenase (complex II, CII), ubiquinol-cytochrome c oxidoreductase (cytochrome b-c1 complex, complex III, CIII) and cytochrome c oxidase (complex IV, CIV), that cooperate to transfer electrons derived from NADH and succinate to molecular oxygen, creating an electrochemical gradient over the inner membrane that drives transmembrane transport and the ATP synthase. The cytochrome b-c1 complex catalyzes electron transfer from ubiquinol to cytochrome c, linking this redox reaction to translocation of protons across the mitochondrial inner membrane, with protons being carried across the membrane as hydrogens on the quinol. In the process called Q cycle, 2 protons are consumed from the matrix, 4 protons are released into the intermembrane space and 2 electrons are passed to cytochrome c. In Arabidopsis thaliana (Mouse-ear cress), this protein is Cytochrome b-c1 complex subunit 6-1, mitochondrial (QCR6-1).